The chain runs to 367 residues: GDSL esterase/lipase At4g28780 (367 aa).

The N-terminal stretch at 1 to 28 (MSTFLLTWIIMTVALSVTLFLMPQQTNA) is a signal peptide. Serine 38 (nucleophile) is an active-site residue. Residue asparagine 119 is glycosylated (N-linked (GlcNAc...) asparagine). Active-site residues include aspartate 328 and histidine 331. A glycan (N-linked (GlcNAc...) asparagine) is linked at asparagine 356.

Belongs to the 'GDSL' lipolytic enzyme family.

The protein resides in the secreted. The protein is GDSL esterase/lipase At4g28780 of Arabidopsis thaliana (Mouse-ear cress).